Here is a 170-residue protein sequence, read N- to C-terminus: ATP synthase subunit b (170 aa).

A helical membrane pass occupies residues 22 to 41 (VLNWAVVVFGLYKFLPGFLG).

It belongs to the ATPase B chain family. In terms of assembly, F-type ATPases have 2 components, F(1) - the catalytic core - and F(0) - the membrane proton channel. F(1) has five subunits: alpha(3), beta(3), gamma(1), delta(1), epsilon(1). F(0) has four main subunits: a(1), b(1), b'(1) and c(10-14). The alpha and beta chains form an alternating ring which encloses part of the gamma chain. F(1) is attached to F(0) by a central stalk formed by the gamma and epsilon chains, while a peripheral stalk is formed by the delta, b and b' chains.

It is found in the cellular thylakoid membrane. Functionally, f(1)F(0) ATP synthase produces ATP from ADP in the presence of a proton or sodium gradient. F-type ATPases consist of two structural domains, F(1) containing the extramembraneous catalytic core and F(0) containing the membrane proton channel, linked together by a central stalk and a peripheral stalk. During catalysis, ATP synthesis in the catalytic domain of F(1) is coupled via a rotary mechanism of the central stalk subunits to proton translocation. Component of the F(0) channel, it forms part of the peripheral stalk, linking F(1) to F(0). The protein is ATP synthase subunit b of Prochlorococcus marinus subsp. pastoris (strain CCMP1986 / NIES-2087 / MED4).